A 115-amino-acid polypeptide reads, in one-letter code: MKINTLQSLINQQITQVGHGGQAGRLTETNPLTENSHQISTAEKAFANEVLEHVKNTALSRHDIACLLPRVSNLELKQGKAGEVIVTGLRTEQLSLSDAKLLLEAAMRQDTAADG.

The segment at 19–38 is disordered; the sequence is HGGQAGRLTETNPLTENSHQ. Polar residues predominate over residues 27-38; that stretch reads TETNPLTENSHQ.

Functionally, belongs to an operon involved in the translocation of Yop proteins across the bacterial membranes or in the specific control of this function. The sequence is that of Yop proteins translocation protein M (yscM) from Yersinia pestis.